A 129-amino-acid polypeptide reads, in one-letter code: Large ribosomal subunit protein bL20 (129 aa).

The protein belongs to the bacterial ribosomal protein bL20 family.

Its function is as follows. Binds directly to 23S ribosomal RNA and is necessary for the in vitro assembly process of the 50S ribosomal subunit. It is not involved in the protein synthesizing functions of that subunit. The protein is Large ribosomal subunit protein bL20 of Mycolicibacterium smegmatis (strain ATCC 700084 / mc(2)155) (Mycobacterium smegmatis).